A 334-amino-acid polypeptide reads, in one-letter code: Putative B3 domain-containing protein At5g66980 (334 aa).

DNA-binding regions (TF-B3) lie at residues 8–105 (LQFF…FAND) and 218–317 (HPHF…VSGR).

It localises to the nucleus. This chain is Putative B3 domain-containing protein At5g66980, found in Arabidopsis thaliana (Mouse-ear cress).